A 495-amino-acid polypeptide reads, in one-letter code: ATP synthase subunit beta, chloroplastic (495 aa).

An ATP-binding site is contributed by 172–179 (GGAGVGKT).

It belongs to the ATPase alpha/beta chains family. F-type ATPases have 2 components, CF(1) - the catalytic core - and CF(0) - the membrane proton channel. CF(1) has five subunits: alpha(3), beta(3), gamma(1), delta(1), epsilon(1). CF(0) has four main subunits: a(1), b(1), b'(1) and c(9-12).

The protein resides in the plastid. Its subcellular location is the chloroplast thylakoid membrane. The catalysed reaction is ATP + H2O + 4 H(+)(in) = ADP + phosphate + 5 H(+)(out). In terms of biological role, produces ATP from ADP in the presence of a proton gradient across the membrane. The catalytic sites are hosted primarily by the beta subunits. This Pseudogaltonia clavata (Cape hyacinth) protein is ATP synthase subunit beta, chloroplastic.